We begin with the raw amino-acid sequence, 127 residues long: Large ribosomal subunit protein bL19 (127 aa).

Belongs to the bacterial ribosomal protein bL19 family.

In terms of biological role, this protein is located at the 30S-50S ribosomal subunit interface and may play a role in the structure and function of the aminoacyl-tRNA binding site. The polypeptide is Large ribosomal subunit protein bL19 (Synechococcus sp. (strain JA-3-3Ab) (Cyanobacteria bacterium Yellowstone A-Prime)).